Consider the following 169-residue polypeptide: HTH-type transcriptional regulator PchR (169 aa).

Positions 10–153 (YDIYVRLLHL…VLKFLEQLTS (144 aa)) constitute an HTH marR-type domain. Positions 64-87 (NAGIARKMNLSKANVTKISTKLIK) form a DNA-binding region, H-T-H motif.

Homodimer.

Its function is as follows. Represses the expression of the yvmC-cypX operon, which is involved in pulcherriminic acid biosynthesis. Also negatively regulates yvmA, yvnB and its own expression. Positively regulates yisI expression. Acts by binding specifically to a 14-bp palindromic motif, the YvmB box, which is present in the promoter region of the target genes. This Bacillus subtilis (strain 168) protein is HTH-type transcriptional regulator PchR.